The chain runs to 305 residues: Serine/threonine-protein phosphatase PP2A catalytic subunit (305 aa).

Asp-53, His-55, Asp-81, and Asn-113 together coordinate Mn(2+). His-114 acts as the Proton donor in catalysis. The Mn(2+) site is built by His-163 and His-237.

The protein belongs to the PPP phosphatase family. PP-2A subfamily. Mn(2+) serves as cofactor.

It catalyses the reaction O-phospho-L-seryl-[protein] + H2O = L-seryl-[protein] + phosphate. The catalysed reaction is O-phospho-L-threonyl-[protein] + H2O = L-threonyl-[protein] + phosphate. This is Serine/threonine-protein phosphatase PP2A catalytic subunit from Helianthus annuus (Common sunflower).